The following is a 247-amino-acid chain: tRNA (guanine-N(1)-)-methyltransferase (247 aa).

Residues glycine 116 and 135–140 (IGDYVL) contribute to the S-adenosyl-L-methionine site.

It belongs to the RNA methyltransferase TrmD family. In terms of assembly, homodimer.

The protein localises to the cytoplasm. It carries out the reaction guanosine(37) in tRNA + S-adenosyl-L-methionine = N(1)-methylguanosine(37) in tRNA + S-adenosyl-L-homocysteine + H(+). Specifically methylates guanosine-37 in various tRNAs. This chain is tRNA (guanine-N(1)-)-methyltransferase, found in Symbiobacterium thermophilum (strain DSM 24528 / JCM 14929 / IAM 14863 / T).